Consider the following 459-residue polypeptide: MSNKAWGGRFEVQPEEWVDDFNASITFDQTLIDQDIEGSIAHATMLANQGIISQQDSEQIIQGLKSIQHDYHQDQIQFSASLEDIHLNIEHELIKRIGDAGGKLHTGRSRNDQVATDMHLYTKKQVQDIIALIKSLQSVIVDIASNNVDTIMPGYTHLQRAQPISFAHHIMTYFWMLQRDQQRFEDSLKRIDINPLGAAALSGTTYPIDRHETTALLNFGSLYENSLDAVSDRDYIIETLHNISLTMVHLSRFAEEIIFWSTDEAKFITLSDAFSTGSSIMPQKKNPDMAELIRGKVGRTTGHLMSMLMTLKGLPLAYNKDMQEDKEGLFDAVHTIKGSLRIFEGMIQTMTINKERLNQTVKEDFSNATELADYLVTKNIPFRTAHEIVGKIVLECIQQGHYLLDVPLATYQQHHSSIDADIYDYLQPENCLKRRQSYGSTGQSSVKQQLDVAKQLLSQ.

Belongs to the lyase 1 family. Argininosuccinate lyase subfamily.

Its subcellular location is the cytoplasm. It catalyses the reaction 2-(N(omega)-L-arginino)succinate = fumarate + L-arginine. It functions in the pathway amino-acid biosynthesis; L-arginine biosynthesis; L-arginine from L-ornithine and carbamoyl phosphate: step 3/3. The protein is Argininosuccinate lyase of Staphylococcus aureus (strain Mu3 / ATCC 700698).